The sequence spans 350 residues: Phenylalanine--tRNA ligase alpha subunit (350 aa).

Glu259 is a binding site for Mg(2+).

This sequence belongs to the class-II aminoacyl-tRNA synthetase family. Phe-tRNA synthetase alpha subunit type 1 subfamily. As to quaternary structure, tetramer of two alpha and two beta subunits. The cofactor is Mg(2+).

The protein resides in the cytoplasm. The enzyme catalyses tRNA(Phe) + L-phenylalanine + ATP = L-phenylalanyl-tRNA(Phe) + AMP + diphosphate + H(+). In Rickettsia prowazekii (strain Madrid E), this protein is Phenylalanine--tRNA ligase alpha subunit (pheS).